Consider the following 514-residue polypeptide: ATP synthase subunit alpha (514 aa).

Position 170–177 (Gly170–Thr177) interacts with ATP.

It belongs to the ATPase alpha/beta chains family. In terms of assembly, F-type ATPases have 2 components, CF(1) - the catalytic core - and CF(0) - the membrane proton channel. CF(1) has five subunits: alpha(3), beta(3), gamma(1), delta(1), epsilon(1). CF(0) has three main subunits: a(1), b(2) and c(9-12). The alpha and beta chains form an alternating ring which encloses part of the gamma chain. CF(1) is attached to CF(0) by a central stalk formed by the gamma and epsilon chains, while a peripheral stalk is formed by the delta and b chains.

Its subcellular location is the cell inner membrane. It catalyses the reaction ATP + H2O + 4 H(+)(in) = ADP + phosphate + 5 H(+)(out). Produces ATP from ADP in the presence of a proton gradient across the membrane. The alpha chain is a regulatory subunit. This Ectopseudomonas mendocina (strain ymp) (Pseudomonas mendocina) protein is ATP synthase subunit alpha.